The chain runs to 738 residues: MIGNDRWVTEIETGPVTEARPDTNAREPGDRTPAAPPAATPAATTDQLPEDRYLNRELSWLEFNARVLALAADDSMPLLERAKFLAIFASNLDEFYMVRVAGLKRRDQMGLSALSADGLTPREQLGRIGEQTQRIASRHARVFRDSVLPALGEEGIYVVTWADLDQAEREQLSTYFHEQVFPVLTPLAVDPAHPFPFVSGLSLNLAVTVRQPEDGGQHFARVKVPDNVDRFVELGGTDTDGAEGAAVHRFLPVEELIAAFLPVLFPGMEIVEHHAFRITRNADFEVEEDRDEDLLQALERELARRRFGSPVRLEVADDMTEGMLELLLRELDVHPGDVIEVPGLLDLSSLWQIYGLDRPALKDRTFVPATHPAFAERETPKSIFATLREGDVLVHHPYYSFSTSVQRFIEQAAADPNVLAIKQTLYRTSGDSPIVRALIDAAEAGKQVVALVEIKARFDEQANIRWARALEQAGVHVAYGIVGLKTHCKTALVVRREGPVIRRYCHIGTGNYNSKTARLYEDVGLLTAAPDIGADLTDLFNSLTGYSRKLSYRNLLVAPHGIRAGIIERVEREVAAHLEHGPQAGKGHIRLKMNALVDEQVIDALYRASQVGVRIEVVVRGICALRPGAEGFSENITARSILGRFLEHSRILHFRAIDEFWIGSADMMHRNLDRRVEVMAQVKDPRLTAQLDDLFESALDPATRCWELGPDGQWTASPQEGRTVRDHQVSLMERHRSP.

The disordered stretch occupies residues 1-48; that stretch reads MIGNDRWVTEIETGPVTEARPDTNAREPGDRTPAAPPAATPAATTDQL. Basic and acidic residues predominate over residues 19-30; it reads ARPDTNAREPGD. ATP is bound at residue Asn-91. Mg(2+) is bound by residues Arg-427 and Arg-457. Catalysis depends on His-487, which acts as the Phosphohistidine intermediate. Residues Tyr-520, Arg-620, and His-648 each coordinate ATP.

Belongs to the polyphosphate kinase 1 (PPK1) family. It depends on Mg(2+) as a cofactor. An intermediate of this reaction is the autophosphorylated ppk in which a phosphate is covalently linked to a histidine residue through a N-P bond.

The catalysed reaction is [phosphate](n) + ATP = [phosphate](n+1) + ADP. Catalyzes the reversible transfer of the terminal phosphate of ATP to form a long-chain polyphosphate (polyP). This Mycobacterium marinum (strain ATCC BAA-535 / M) protein is Polyphosphate kinase.